A 265-amino-acid polypeptide reads, in one-letter code: Hydroxyethylthiazole kinase (265 aa).

Methionine 36 contacts substrate. ATP-binding residues include lysine 112 and serine 160. Glycine 187 provides a ligand contact to substrate.

It belongs to the Thz kinase family. Mg(2+) is required as a cofactor.

The catalysed reaction is 5-(2-hydroxyethyl)-4-methylthiazole + ATP = 4-methyl-5-(2-phosphooxyethyl)-thiazole + ADP + H(+). The protein operates within cofactor biosynthesis; thiamine diphosphate biosynthesis; 4-methyl-5-(2-phosphoethyl)-thiazole from 5-(2-hydroxyethyl)-4-methylthiazole: step 1/1. Its function is as follows. Catalyzes the phosphorylation of the hydroxyl group of 4-methyl-5-beta-hydroxyethylthiazole (THZ). This chain is Hydroxyethylthiazole kinase, found in Clostridium perfringens (strain 13 / Type A).